The following is a 145-amino-acid chain: Deoxyuridine 5'-triphosphate nucleotidohydrolase (145 aa).

Residues 62 to 64, asparagine 75, 79 to 81, and lysine 89 each bind substrate; these read RSG and TVD.

Belongs to the dUTPase family. Mg(2+) is required as a cofactor.

It catalyses the reaction dUTP + H2O = dUMP + diphosphate + H(+). It participates in pyrimidine metabolism; dUMP biosynthesis; dUMP from dCTP (dUTP route): step 2/2. In terms of biological role, this enzyme is involved in nucleotide metabolism: it produces dUMP, the immediate precursor of thymidine nucleotides and it decreases the intracellular concentration of dUTP so that uracil cannot be incorporated into DNA. The polypeptide is Deoxyuridine 5'-triphosphate nucleotidohydrolase (Helicobacter pylori (strain ATCC 700392 / 26695) (Campylobacter pylori)).